A 195-amino-acid chain; its full sequence is Cysteine/O-acetylserine efflux protein (195 aa).

Topologically, residues 1 to 7 (MTPTLLS) are periplasmic. A helical membrane pass occupies residues 8–28 (AFWTYTLITAMTPGPNNILAL). The Cytoplasmic portion of the chain corresponds to 29-46 (SSATSHGFRQSTRVLAGM). A helical membrane pass occupies residues 47-67 (SLGFLIVMLLCAGISFSLAVI). At 68–69 (DP) the chain is on the periplasmic side. Residues 70–90 (AAVHLLSWAGAAYIVWLAWKI) traverse the membrane as a helical segment. At 91–104 (ATSPTKEDGLQAKP) the chain is on the cytoplasmic side. A helical membrane pass occupies residues 105–125 (ISFWASFALQFVNVKIILYGV). The Periplasmic segment spans residues 126 to 141 (TALSTFVLPQTQALSW). The chain crosses the membrane as a helical span at residues 142–162 (VVGVSVLLAMIGTFGNVCWAL). Over 163-176 (AGHLFQRLFRQYGR) the chain is Cytoplasmic. Residues 177–194 (QLNIVLALLLVYCAVRIF) traverse the membrane as a helical segment. Y195 is a topological domain (periplasmic).

This sequence belongs to the Rht family.

The protein resides in the cell inner membrane. The enzyme catalyses O-acetyl-L-serine(in) = O-acetyl-L-serine(out). The catalysed reaction is L-cysteine(in) = L-cysteine(out). Functionally, exporter of O-acetylserine (OAS) and cysteine. The chain is Cysteine/O-acetylserine efflux protein (eamB) from Escherichia coli O9:H4 (strain HS).